A 204-amino-acid polypeptide reads, in one-letter code: Large ribosomal subunit protein uL22m (204 aa).

Residues Met-1–Glu-38 constitute a mitochondrion transit peptide.

It belongs to the universal ribosomal protein uL22 family. Component of the mitochondrial ribosome large subunit (39S) which comprises a 16S rRNA and about 50 distinct proteins.

Its subcellular location is the mitochondrion. This is Large ribosomal subunit protein uL22m (MRPL22) from Bos taurus (Bovine).